Reading from the N-terminus, the 71-residue chain is Pro-glucagon (71 aa).

It belongs to the glucagon family.

Its subcellular location is the secreted. Its function is as follows. Plays a key role in glucose metabolism and homeostasis. Regulates blood glucose by increasing gluconeogenesis and decreasing glycolysis. In Piaractus mesopotamicus (Small-scaled pacu), this protein is Pro-glucagon (gcg).